Here is an 87-residue protein sequence, read N- to C-terminus: Mitochondrial import inner membrane translocase subunit TIM8 (87 aa).

The short motif at 44-68 is the Twin CX3C motif element; sequence CFKKCVESVNDSNLSSQEEQCLSNC. Intrachain disulfides connect C44–C68 and C48–C64.

This sequence belongs to the small Tim family. In terms of assembly, heterohexamer; composed of 3 copies of TIM8 and 3 copies of TIM13, named soluble 70 kDa complex. Associates with the TIM22 complex, whose core is composed of TIM18, TIM22 and TIM54. Interacts with the transmembrane regions of multi-pass transmembrane proteins in transit.

The protein resides in the mitochondrion inner membrane. It is found in the mitochondrion intermembrane space. Mitochondrial intermembrane chaperone that participates in the import and insertion of some multi-pass transmembrane proteins into the mitochondrial inner membrane. Also required for the transfer of beta-barrel precursors from the TOM complex to the sorting and assembly machinery (SAM complex) of the outer membrane. Acts as a chaperone-like protein that protects the hydrophobic precursors from aggregation and guide them through the mitochondrial intermembrane space. The TIM8-TIM13 complex is non essential and only mediates the import of few proteins under precise conditions, while the predominant TIM9-TIM10 70 kDa complex is crucial and mediates the import of much more proteins. Strictly required for import of TIM23 in some conditions, when a low membrane potential exists in the mitochondria. This chain is Mitochondrial import inner membrane translocase subunit TIM8 (TIM8), found in Saccharomyces cerevisiae (strain ATCC 204508 / S288c) (Baker's yeast).